A 525-amino-acid polypeptide reads, in one-letter code: GMP synthase [glutamine-hydrolyzing] (525 aa).

Positions 9-207 (RILILDFGSQ…VLTISGCEAL (199 aa)) constitute a Glutamine amidotransferase type-1 domain. Residue Cys86 is the Nucleophile of the active site. Catalysis depends on residues His181 and Glu183. One can recognise a GMPS ATP-PPase domain in the interval 208–400 (WTPAKIVDDA…LGLPYDMVYR (193 aa)). Position 235-241 (235-241 (SGGVDSS)) interacts with ATP.

As to quaternary structure, homodimer.

The enzyme catalyses XMP + L-glutamine + ATP + H2O = GMP + L-glutamate + AMP + diphosphate + 2 H(+). It participates in purine metabolism; GMP biosynthesis; GMP from XMP (L-Gln route): step 1/1. In terms of biological role, catalyzes the synthesis of GMP from XMP. The polypeptide is GMP synthase [glutamine-hydrolyzing] (Marinobacter nauticus (strain ATCC 700491 / DSM 11845 / VT8) (Marinobacter aquaeolei)).